The chain runs to 486 residues: FAD-dependent oxidoreductase domain-containing protein 1 (486 aa).

Residues 62 to 82 form a helical membrane-spanning segment; sequence EHSDVVIVGGGVLGLSVAYWL.

In terms of assembly, associates with components of the mitochondrial respiratory chain complex I. Requires FAD as cofactor.

Its subcellular location is the mitochondrion inner membrane. Required for the assembly of the mitochondrial membrane respiratory chain NADH dehydrogenase (Complex I). Involved in mid-late stages of complex I assembly. The chain is FAD-dependent oxidoreductase domain-containing protein 1 from Homo sapiens (Human).